A 426-amino-acid polypeptide reads, in one-letter code: MHEYIIQGGFPVNGTIKASGNKNAALPCIAAAILSEEPIILKNIPEIEDVFVMLQVFEALGGHYEKIEKNVFKLQIEKVKTSKIPEDLATKIRASILFAGPLLARTGKAVLPPPGGDVIGRRRLDTHFLALTELGARVETDQNFSFIAHKLMGEDIFLDEASVTATENAIMAASLAEGTTIISNAASEPHVQELCKMLNKMGAKISGVGSNILTIEGVKKLNGTEHRIGPDYMEIGSFIGLAAVTRGQLKITDVEPRDMRPLRVAFGKLGIGWSLEGTTLTVPDKQKMQVNCDLGGMIPKIDDAPWPGFPPDLTSIMTVIATQVEGTVLIHEKMFESRMFFVDKLIGMGARITLCDPHRAVISGPSSLHGSELVSPDVRAGMAMVIAACCARGESIIRNVYQIERGYEHLVERLKSIGVKIELKEK.

Residue 22 to 23 (KN) coordinates phosphoenolpyruvate. Arginine 93 lines the UDP-N-acetyl-alpha-D-glucosamine pocket. Aspartate 117 serves as the catalytic Proton donor. Aspartate 312 and methionine 334 together coordinate UDP-N-acetyl-alpha-D-glucosamine.

This sequence belongs to the EPSP synthase family. MurA subfamily.

The protein localises to the cytoplasm. It carries out the reaction phosphoenolpyruvate + UDP-N-acetyl-alpha-D-glucosamine = UDP-N-acetyl-3-O-(1-carboxyvinyl)-alpha-D-glucosamine + phosphate. The protein operates within cell wall biogenesis; peptidoglycan biosynthesis. Cell wall formation. Adds enolpyruvyl to UDP-N-acetylglucosamine. The chain is UDP-N-acetylglucosamine 1-carboxyvinyltransferase from Treponema denticola (strain ATCC 35405 / DSM 14222 / CIP 103919 / JCM 8153 / KCTC 15104).